The primary structure comprises 333 residues: 4-hydroxy-3-methylbut-2-enyl diphosphate reductase (333 aa).

C20 provides a ligand contact to [4Fe-4S] cluster. (2E)-4-hydroxy-3-methylbut-2-enyl diphosphate is bound by residues H49 and H85. H49 and H85 together coordinate dimethylallyl diphosphate. Residues H49 and H85 each contribute to the isopentenyl diphosphate site. C107 contributes to the [4Fe-4S] cluster binding site. H135 is a (2E)-4-hydroxy-3-methylbut-2-enyl diphosphate binding site. H135 contributes to the dimethylallyl diphosphate binding site. An isopentenyl diphosphate-binding site is contributed by H135. The active-site Proton donor is the E137. T176 is a binding site for (2E)-4-hydroxy-3-methylbut-2-enyl diphosphate. C206 serves as a coordination point for [4Fe-4S] cluster. Residues S234, S235, N236, and S279 each coordinate (2E)-4-hydroxy-3-methylbut-2-enyl diphosphate. S234, S235, N236, and S279 together coordinate dimethylallyl diphosphate. Isopentenyl diphosphate-binding residues include S234, S235, N236, and S279.

The protein belongs to the IspH family. The cofactor is [4Fe-4S] cluster.

It catalyses the reaction isopentenyl diphosphate + 2 oxidized [2Fe-2S]-[ferredoxin] + H2O = (2E)-4-hydroxy-3-methylbut-2-enyl diphosphate + 2 reduced [2Fe-2S]-[ferredoxin] + 2 H(+). The enzyme catalyses dimethylallyl diphosphate + 2 oxidized [2Fe-2S]-[ferredoxin] + H2O = (2E)-4-hydroxy-3-methylbut-2-enyl diphosphate + 2 reduced [2Fe-2S]-[ferredoxin] + 2 H(+). The protein operates within isoprenoid biosynthesis; dimethylallyl diphosphate biosynthesis; dimethylallyl diphosphate from (2E)-4-hydroxy-3-methylbutenyl diphosphate: step 1/1. It participates in isoprenoid biosynthesis; isopentenyl diphosphate biosynthesis via DXP pathway; isopentenyl diphosphate from 1-deoxy-D-xylulose 5-phosphate: step 6/6. Functionally, catalyzes the conversion of 1-hydroxy-2-methyl-2-(E)-butenyl 4-diphosphate (HMBPP) into a mixture of isopentenyl diphosphate (IPP) and dimethylallyl diphosphate (DMAPP). Acts in the terminal step of the DOXP/MEP pathway for isoprenoid precursor biosynthesis. This Rhizobium leguminosarum bv. trifolii (strain WSM2304) protein is 4-hydroxy-3-methylbut-2-enyl diphosphate reductase.